A 207-amino-acid polypeptide reads, in one-letter code: dITP/XTP pyrophosphatase (207 aa).

Threonine 8–lysine 13 is a binding site for substrate. Aspartate 72 acts as the Proton acceptor in catalysis. Aspartate 72 lines the Mg(2+) pocket. Residues serine 73, phenylalanine 157–aspartate 160, lysine 180, and histidine 185–arginine 186 each bind substrate.

It belongs to the HAM1 NTPase family. Homodimer. The cofactor is Mg(2+).

The catalysed reaction is XTP + H2O = XMP + diphosphate + H(+). It catalyses the reaction dITP + H2O = dIMP + diphosphate + H(+). The enzyme catalyses ITP + H2O = IMP + diphosphate + H(+). Its function is as follows. Pyrophosphatase that catalyzes the hydrolysis of nucleoside triphosphates to their monophosphate derivatives, with a high preference for the non-canonical purine nucleotides XTP (xanthosine triphosphate), dITP (deoxyinosine triphosphate) and ITP. Seems to function as a house-cleaning enzyme that removes non-canonical purine nucleotides from the nucleotide pool, thus preventing their incorporation into DNA/RNA and avoiding chromosomal lesions. This chain is dITP/XTP pyrophosphatase, found in Lactobacillus johnsonii (strain CNCM I-12250 / La1 / NCC 533).